Consider the following 162-residue polypeptide: Transcriptional repressor NrdR (162 aa).

Residues 3-34 fold into a zinc finger; the sequence is CPYCHHTDSRVLESRSAEGGQSIRRRRECLAC. Positions 49 to 139 constitute an ATP-cone domain; that stretch reads ITVIKRNGDR…VYRQFQGISD (91 aa).

This sequence belongs to the NrdR family. Requires Zn(2+) as cofactor.

In terms of biological role, negatively regulates transcription of bacterial ribonucleotide reductase nrd genes and operons by binding to NrdR-boxes. The protein is Transcriptional repressor NrdR of Thermosynechococcus vestitus (strain NIES-2133 / IAM M-273 / BP-1).